The following is a 308-amino-acid chain: D-alanine--D-alanine ligase (308 aa).

An ATP-grasp domain is found at 105–302 (KAIFRSLGLA…FPDLCERILD (198 aa)). 133-188 (DLPFGLPCVVKPAGEGSSVGVHLVNEAAELGPACRDAASHAGDVIVERYVKGTEVD) provides a ligand contact to ATP. Mg(2+) is bound by residues aspartate 256, glutamate 269, and asparagine 271.

It belongs to the D-alanine--D-alanine ligase family. The cofactor is Mg(2+). It depends on Mn(2+) as a cofactor.

Its subcellular location is the cytoplasm. It carries out the reaction 2 D-alanine + ATP = D-alanyl-D-alanine + ADP + phosphate + H(+). It functions in the pathway cell wall biogenesis; peptidoglycan biosynthesis. Cell wall formation. The polypeptide is D-alanine--D-alanine ligase (Anaeromyxobacter sp. (strain K)).